A 51-amino-acid chain; its full sequence is Large ribosomal subunit protein bL33 (51 aa).

Belongs to the bacterial ribosomal protein bL33 family.

This is Large ribosomal subunit protein bL33 from Ruthia magnifica subsp. Calyptogena magnifica.